Consider the following 708-residue polypeptide: Assimilatory nitrate reductase (708 aa).

The region spanning 15–73 (TKQVPTTCMRCAVGCGHVHLGSENAYGLETVRGDPSHPVNNGLACGRGIRESADPAGEW) is the 4Fe-4S Mo/W bis-MGD-type domain. [4Fe-4S] cluster is bound by residues cysteine 22, cysteine 25, cysteine 29, and cysteine 59. Residues 586 to 613 (TTGREADGYNTGVRSRSDTPEEPVARVN) are disordered.

This sequence belongs to the prokaryotic molybdopterin-containing oxidoreductase family. NasA/NapA/NarB subfamily. Is probably a monomer. Initially characterized as a dimer of proteins with a MW of 105 and 50 kDa. Requires [4Fe-4S] cluster as cofactor. Mo-bis(molybdopterin guanine dinucleotide) is required as a cofactor.

The protein localises to the cytoplasm. The enzyme catalyses nitrite + 2 oxidized [2Fe-2S]-[ferredoxin] + H2O = nitrate + 2 reduced [2Fe-2S]-[ferredoxin] + 2 H(+). It functions in the pathway nitrogen metabolism; nitrate reduction (assimilation). Its activity is regulated as follows. Inhibited by cyanide and azide. Nitrate reductase is a key enzyme involved in the first step of nitrate assimilation. Catalyzes the reduction of nitrate to nitrite, using ferredoxin as the electron donor. Can use reduced methyl viologen but neither NADPH nor NADH as electron donors. The polypeptide is Assimilatory nitrate reductase (Haloferax mediterranei (strain ATCC 33500 / DSM 1411 / JCM 8866 / NBRC 14739 / NCIMB 2177 / R-4) (Halobacterium mediterranei)).